We begin with the raw amino-acid sequence, 315 residues long: Cyclin-dependent kinase B2-2 (315 aa).

A Protein kinase domain is found at 16–306 (FEKLEKVGEG…AKKAMEHPYF (291 aa)). ATP contacts are provided by residues 22 to 30 (VGEGTYGKV) and Lys-45. Tyr-27 carries the phosphotyrosine modification. The active-site Proton acceptor is Asp-147. At Thr-181 the chain carries Phosphothreonine.

It belongs to the protein kinase superfamily. CMGC Ser/Thr protein kinase family. CDC2/CDKX subfamily. Expressed in flowers.

The enzyme catalyses L-seryl-[protein] + ATP = O-phospho-L-seryl-[protein] + ADP + H(+). It carries out the reaction L-threonyl-[protein] + ATP = O-phospho-L-threonyl-[protein] + ADP + H(+). The catalysed reaction is [DNA-directed RNA polymerase] + ATP = phospho-[DNA-directed RNA polymerase] + ADP + H(+). The chain is Cyclin-dependent kinase B2-2 (CDKB2-2) from Arabidopsis thaliana (Mouse-ear cress).